Here is a 147-residue protein sequence, read N- to C-terminus: Large ribosomal subunit protein bL9 (147 aa).

Belongs to the bacterial ribosomal protein bL9 family.

Binds to the 23S rRNA. The polypeptide is Large ribosomal subunit protein bL9 (Natranaerobius thermophilus (strain ATCC BAA-1301 / DSM 18059 / JW/NM-WN-LF)).